A 218-amino-acid polypeptide reads, in one-letter code: Structural protein V19 (218 aa).

It localises to the virion. The protein is Structural protein V19 of Sputnik virophage.